The sequence spans 782 residues: uncharacterized protein (782 aa).

The helical transmembrane segment at 10–30 (LLTITIGAVAVSSILLGGIFY) threads the bilayer. The segment covering 57–76 (LDYQKARPSIKDSNLKEIPK) has biased composition (basic and acidic residues). Residues 57–171 (LDYQKARPSI…PQPQQVPNNS (115 aa)) form a disordered region. Residues 77–97 (PKPQPKPKPQPTPFPDPIPTP) show a composition bias toward pro residues. Positions 98 to 124 (PKKEELKKPDIKPEEPKKPEIKPEPKP) are enriched in basic and acidic residues. Residues 125-135 (EPIPQPAPPIE) show a composition bias toward pro residues.

The protein to U.parvum UU046.

It is found in the membrane. This is an uncharacterized protein from Ureaplasma parvum serovar 3 (strain ATCC 700970).